The sequence spans 345 residues: S-adenosylmethionine:tRNA ribosyltransferase-isomerase (345 aa).

It belongs to the QueA family. As to quaternary structure, monomer.

It localises to the cytoplasm. The enzyme catalyses 7-aminomethyl-7-carbaguanosine(34) in tRNA + S-adenosyl-L-methionine = epoxyqueuosine(34) in tRNA + adenine + L-methionine + 2 H(+). Its pathway is tRNA modification; tRNA-queuosine biosynthesis. Its function is as follows. Transfers and isomerizes the ribose moiety from AdoMet to the 7-aminomethyl group of 7-deazaguanine (preQ1-tRNA) to give epoxyqueuosine (oQ-tRNA). This is S-adenosylmethionine:tRNA ribosyltransferase-isomerase from Finegoldia magna (strain ATCC 29328 / DSM 20472 / WAL 2508) (Peptostreptococcus magnus).